Here is a 404-residue protein sequence, read N- to C-terminus: MSFRNSSRMAMKALRTMGSRRLATRSMSVMARTIAAPSMRFAPRMTAPLMQTRGMRVMDFAGTKENVWERSDWPREKLVDYFKNDTLAIIGYGSQGHGQGLNARDQGLNVIVGVRKDGASWKQAIEDGWVPGKTLFPVEEAIKKGSIIMNLLSDAAQTETWPKIAPLITKGKTLYFSHGFSVIFKDQTKIHPPKDVDVILVAPKGSGRTVRTLFKEGRGINSSFAVYQDVTGKAQEKAIGLAVAVGSGFIYQTTFKKEVISDLVGERGCLMGGINGLFLAQYQVLRERGHSPAEAFNETVEEATQSLYPLIGKYGLDYMFAACSTTARRGAIDWTPRFLEANKKVLNELYDNVENGNEAKRSLEYNSAPNYRELYDKELEEIRNLEIWKAGEVVRSLRPEHNKH.

The KARI N-terminal Rossmann domain occupies 63-253 (TKENVWERSD…AVGSGFIYQT (191 aa)). NADP(+) contacts are provided by residues 91–100 (GYGSQGHGQG), 115–120 (RKDGAS), and 153–157 (SDAAQ). H178 is a catalytic residue. Residues 254-401 (TFKKEVISDL…EVVRSLRPEH (148 aa)) form the KARI C-terminal knotted domain. At S261 the chain carries Phosphoserine. Mg(2+) is bound by residues D262, E266, E298, and E302. S324 contributes to the substrate binding site.

This sequence belongs to the ketol-acid reductoisomerase family. Mg(2+) is required as a cofactor.

It localises to the mitochondrion. It carries out the reaction (2R)-2,3-dihydroxy-3-methylbutanoate + NADP(+) = (2S)-2-acetolactate + NADPH + H(+). The enzyme catalyses (2R,3R)-2,3-dihydroxy-3-methylpentanoate + NADP(+) = (S)-2-ethyl-2-hydroxy-3-oxobutanoate + NADPH + H(+). The protein operates within amino-acid biosynthesis; L-isoleucine biosynthesis; L-isoleucine from 2-oxobutanoate: step 2/4. It functions in the pathway amino-acid biosynthesis; L-valine biosynthesis; L-valine from pyruvate: step 2/4. In Schizosaccharomyces pombe (strain 972 / ATCC 24843) (Fission yeast), this protein is Probable ketol-acid reductoisomerase, mitochondrial (ilv5).